We begin with the raw amino-acid sequence, 388 residues long: MKIFLCLIAVVSLQGVLAYDIEREYAWKNISFEGIDPASYSVKNSIVTGFAHDADSKKIFITIPRLNPVPITLTELDTTKHPEGSPPLSKFPGSDKLISVYQPVIDECRRLWIVDAGQVEYKGDEQKIPKKNAAIIAYDLTKDNYPEIDRYEIPNNVAGNPLGFGGFAVDVTNPKEGCGKTFVYITNFEDNTLIVYDQEKKDSWKISHDSFKPEHESILTHNGAQHILKLGIFGITLGDLDEEGNRQAYYLGGSSTKLFRVNTKDLKKKAGQIEFTPLGDRGSHSEALALAYDPKTKVIFFIEYNSKRISCWNTQKSLNPDNIDVIYHSPDFIFGTDISMDSESKLWFFSNGHPPIENVQLTFDKPHFRLISMDTKKSIHGTKCEVKP.

The N-terminal stretch at 1-18 (MKIFLCLIAVVSLQGVLA) is a signal peptide. Asn29 carries N-linked (GlcNAc...) asparagine glycosylation.

The protein belongs to the major royal jelly protein family. As to expression, female salivary gland (at protein level).

The protein resides in the secreted. In terms of biological role, probably modulates blood feeding of sand flies on vertebrate species by binding and sequestering different mediators involved in the host response. Binds biogenic amines. Binds noradrenaline with medium affinity. Binds octopamine with low affinity. Poorly binds histamine, adrenaline and serotonin. The polypeptide is Yellow-related salivary protein SP03 (Phlebotomus perniciosus (Phlebotomine sand fly)).